A 219-amino-acid polypeptide reads, in one-letter code: Transmembrane emp24 domain-containing protein 10 (219 aa).

A signal peptide spans M1–A31. The segment at M1–E142 is required for interaction with STX17. Residues I32–R185 are Lumenal-facing. The GOLD domain occupies R41 to S193. The required for TMED10 and TMED2 cis-Golgi network localization stretch occupies residues L147–T178. Residues R171 and R176 each carry the dimethylated arginine modification. N-linked (GlcNAc...) asparagine glycosylation is present at N179. A helical transmembrane segment spans residues V186–F206. The tract at residues Q204–E219 is interaction with COPG1. Topologically, residues Y207 to E219 are cytoplasmic. The segment at Y207–E219 is interaction with ARF1 and IL1B. The short motif at F211–F212 is the COPII vesicle coat-binding element. Residues F211–E219 carry the COPI vesicle coat-binding motif.

The protein belongs to the EMP24/GP25L family. In terms of assembly, predominantly dimeric and to a lesser extent monomeric in the ER. Monomer and dimer in ERGIC and cis-Golgi network. Forms homooligomer (via GOLD domain); the assembly is promoted by direct binding with leaderless cargos and may form a protein channel that facilitates cargo entry into the ERGIC. Forms heterooligomeric complexes with other members of the p24 family such as TMED2, TMED7 and TMED9. Interacts (via GOLD domain) with TMED2 (via GOLD domain); the complex is required for export of TMED10 from the ER to the cis-Golgi network; the complex is proposed to be involved in cis-Golgi network dynamics and / or biogenesis. Associates with the COPI vesicle coat subunits (coatomer). Tetramerization of the cytoplasmic domain at the Golgi membrane in vitro; the complex is proposed to interact with COPI coatomer and induce budding of the vesicles. Interacts with COPG1; the interaction involves TMED10 homodimer. Interacts with ARF1 (GDP-bound); the interaction probably involves a TMED10 oligomer. Interacts with SEC23A, SEC24B, SEC24C and SEC24D components of the coat protein complex II/COPII, indicative of an association of TMED10 with the COPII vesicle coat. Interacts with CD59. Interacts with MPPE1/PGAP5; the complex might recruit and sort GPI-anchored proteins to the ER-exit site, or the interaction might lead to recycling of PGAP5 between the ER and the Golgi. Interacts with F2LR1/PAR2. Interacts with KDELR2/ERD2; the interaction is disrupted by KDELR2 ligand. Found in a complex composed at least of SURF4, TMED2 and TMED10. Associates with the presenilin-dependent gamma-secretase complex. Interacts with STX17; the interaction is direct. Interacts with IL-1; the interaction is direct. Interacts with RAB21 (active GTP-bound form); the interaction is indirect and regulates TMED10 abundance and localization at the Golgi.

It is found in the endoplasmic reticulum membrane. The protein localises to the endoplasmic reticulum-Golgi intermediate compartment membrane. It localises to the golgi apparatus membrane. Its subcellular location is the golgi apparatus. The protein resides in the cis-Golgi network membrane. It is found in the trans-Golgi network membrane. The protein localises to the cytoplasmic vesicle. It localises to the secretory vesicle membrane. Its subcellular location is the cell membrane. The protein resides in the melanosome. Its function is as follows. Cargo receptor involved in protein vesicular trafficking and quality control in the endoplasmic reticulum (ER) and Golgi. The p24 protein family is a group of transmembrane proteins that bind coat protein complex I/COPI and coat protein complex II/COPII involved in vesicular trafficking between the membranes. Acts at the lumenal side for incorporation of secretory cargo molecules into transport vesicles and involved in vesicle coat formation at the cytoplasmic side. Mainly functions in the early secretory pathway and cycles between the ER, ER-Golgi intermediate compartment (ERGIC) and Golgi, mediating cargo transport through COPI and COPII-coated vesicles. In COPII vesicle-mediated anterograde transport, involved in the transport of GPI-anchored proteins by acting together with TMED2 as their cargo receptor; the function specifically implies SEC24C and SEC24D of the COPII vesicle coat and lipid raft-like microdomains of the ER. Recognizes GPI anchors structural remodeled in the ER by the GPI inositol-deacylase/PGAP1 and the metallophosphoesterase MPPE1/PGAP5. In COPI vesicle-mediated retrograde transport, involved in the biogenesis of COPI vesicles and vesicle coat recruitment. Involved in trafficking of amyloid beta A4 protein and soluble APP-beta release (independent from the modulation of gamma-secretase activity). Involved in the KDELR2-mediated retrograde transport of the toxin A subunit (CTX-A-K63)together with COPI and the COOH terminus of KDELR2. On Golgi membranes, acts as a primary receptor for ARF1-GDP, a GTP-binding protein involved in COPI-vesicle formation. Increases coatomer-dependent GTPase-activating activity of ARFGAP2 which mediates the hydrolysis of ARF1-bound GTP and therefore modulates protein trafficking from the Golgi apparatus. Involved in the exocytic trafficking of G protein-coupled receptors F2LR1/PAR2 (trypsin and tryspin-like enzyme receptor), OPRM1 (opioid receptor) and P2RY4 (UTD and UDP receptor) from the Golgi to the plasma membrane, thus contributing to receptor resensitization. In addition to its cargo receptor activity, may also act as a protein channel after oligomerization, facilitating the post-translational entry of leaderless cytoplasmic cargo into the ERGIC. Involved in the translocation into ERGIC, the vesicle entry and the secretion of leaderless cargos (lacking the secretion signal sequence), including the mature form of interleukin 1/IL-1 family members, the alpha-crystallin B chain HSPB5, the carbohydrate-binding proteins galectin-1/LGALS1 and galectin-3/LGALS3, the microtubule-associated protein Tau/MAPT, and the annexin A1/ANXA1; the translocation process is dependent on cargo protein unfolding and enhanced by chaperones HSP90AB1 and HSP90B1/GRP9. Could also associates with the presenilin-dependent gamma-secretase complex in order to regulate gamma-cleavages of the amyloid beta A4 protein to yield amyloid-beta 40/Abeta40. This is Transmembrane emp24 domain-containing protein 10 from Homo sapiens (Human).